The sequence spans 578 residues: Telomere repeat-binding protein 1 (578 aa).

The 80-residue stretch at valine 293–glutamate 372 folds into the Ubiquitin-like domain. The interval glutamate 440 to isoleucine 467 is disordered. Positions alanine 463–lysine 522 constitute an HTH myb-type domain. Interaction with DNA regions lie at residues arginine 465–arginine 469, lysine 511–lysine 515, and lysine 522–arginine 529. The segment at residues tryptophan 491–valine 518 is a DNA-binding region (H-T-H motif).

As to quaternary structure, homodimer and heterodimer with TRP2 and TRP3. Interacts with KU70. Expressed ubiquitously. Highest expression in flowers and leaves.

Its subcellular location is the nucleus. In terms of biological role, binds specifically to the plant telomeric double-stranded DNA sequences 5'-GGTTTAG-3'. At least 4 repeats of telomeric sequences are required for binding. Induces DNA bending. The sequence is that of Telomere repeat-binding protein 1 (TRP1) from Arabidopsis thaliana (Mouse-ear cress).